The chain runs to 1166 residues: UDP-N-acetylglucosamine transferase subunit ALG13 (1166 aa).

A glycosyltransferase activity region spans residues 1–125 (MKRAFVTVGT…LHKEGHLFYC (125 aa)). Residues 126-394 (TCRVLSCPAP…GSRRNKHHAL (269 aa)) are deubiquitinase activity. The OTU domain occupies 225–346 (LFRKVVAKDA…NGHYDSVYSK (122 aa)). The For deubiquitinase activity role is filled by Asp-233. Residue Cys-236 is the Nucleophile; for deubiquitinase activity of the active site. The active-site For deubiquitinase activity is the His-339. Residues 393 to 438 (ALTASVEGSSDQKSSTEDRTEEAAACSSAASTPEGNKQGTERQKVP) are disordered. One can recognise a Tudor domain in the interval 486–546 (YYFLGDKCQV…RPVNQVALLP (61 aa)). 3 stretches are compositionally biased toward pro residues: residues 921-930 (PPPLPPPPPA), 941-957 (PLPP…PPYS), and 1004-1034 (QPQP…PPPQ). Disordered stretches follow at residues 921–966 (PPPL…SDLP) and 998–1056 (QQQL…EQPL).

This sequence belongs to the glycosyltransferase 28 family. In terms of assembly, forms with ALG14 the active heterodimeric UDP-N-acetylglucosamine transferase complex. Not able to interact with ALG14 to form an active UDP-N-acetylglucosamine transferase complex.

Its subcellular location is the endoplasmic reticulum membrane. The enzyme catalyses an N-acetyl-alpha-D-glucosaminyl-diphospho-di-trans,poly-cis-dolichol + UDP-N-acetyl-alpha-D-glucosamine = an N,N'-diacetylchitobiosyl-diphospho-di-trans,poly-cis-dolichol + UDP + H(+). It participates in protein modification; protein glycosylation. Catalytic subunit of the UDP-N-acetylglucosamine transferase complex that operates in the biosynthetic pathway of dolichol-linked oligosaccharides, the glycan precursors employed in protein asparagine (N)-glycosylation. The assembly of dolichol-linked oligosaccharides begins on the cytosolic side of the endoplasmic reticulum membrane and finishes in its lumen. The sequential addition of sugars to dolichol pyrophosphate produces dolichol-linked oligosaccharides containing fourteen sugars, including two GlcNAcs, nine mannoses and three glucoses. Once assembled, the oligosaccharide is transferred from the lipid to nascent proteins by oligosaccharyltransferases. On the cytoplasmic face of the endoplasmic reticulum, the dimeric ALG13/ALG14 complex catalyzes the second step of dolichol pyrophosphate biosynthesis, transferring a beta1,4-linked N-acetylglucosamine (GlcNAc) from UDP-GlcNAc to GlcNAc-pyrophosphatedolichol (Gn-PDol) to produce N,N'-diacetylchitobiosyl diphosphodolichol. N,N'-diacetylchitobiosyl diphosphodolichol is a substrate for ALG1, the following enzyme in the biosynthetic pathway. In terms of biological role, no glycosyltransferase or deubiquitinase activity is detected for this potential multifunctional enzyme. The protein is UDP-N-acetylglucosamine transferase subunit ALG13 of Mus musculus (Mouse).